Here is a 276-residue protein sequence, read N- to C-terminus: Small ribosomal subunit protein uS2 (276 aa).

Belongs to the universal ribosomal protein uS2 family.

The sequence is that of Small ribosomal subunit protein uS2 from Chlamydia abortus (strain DSM 27085 / S26/3) (Chlamydophila abortus).